The primary structure comprises 749 residues: Disintegrin and metalloproteinase domain-containing protein 10 (749 aa).

An N-terminal signal peptide occupies residues 1–19; it reads MVLPTVLILLLSWAAGLGG. Residues 20-214 constitute a propeptide that is removed on maturation; sequence QYGNPLNKYI…SGPELLRKKR (195 aa). Residues 20-673 are Extracellular-facing; that stretch reads QYGNPLNKYI…SPQLYENIAE (654 aa). The Cysteine switch motif lies at 171–178; the sequence is GGCADHSV. Residue C173 participates in Zn(2+) binding. The Peptidase M12B domain occupies 221-457; the sequence is NTCQLYIQTD…KRNNCFVESG (237 aa). 17 disulfide bridges follow: C223–C314, C345–C452, C400–C436, C461–C496, C472–C485, C474–C480, C484–C516, C504–C512, C511–C537, C525–C544, C531–C563, C556–C568, C573–C599, C581–C608, C583–C598, C595–C640, and C633–C646. Residues N268 and N279 are each glycosylated (N-linked (GlcNAc...) asparagine). H384 lines the Zn(2+) pocket. E385 is a catalytic residue. Zn(2+)-binding residues include H388 and H394. A glycan (N-linked (GlcNAc...) asparagine) is linked at N440. The Disintegrin domain maps to 458-552; it reads QPICGNGMVE…LCPASDPKPN (95 aa). N-linked (GlcNAc...) asparagine glycosylation occurs at N552. A helical membrane pass occupies residues 674 to 694; sequence WIVAHWWAVLLMGIALIMLMA. Topologically, residues 695 to 749 are cytoplasmic; sequence GFIKICSVHTPSSNPKLPPPKPLPGTLKRRRPPQPIQQPPRQRPRESYQMGHMRR. The disordered stretch occupies residues 705-749; sequence PSSNPKLPPPKPLPGTLKRRRPPQPIQQPPRQRPRESYQMGHMRR. The SH3-binding motif lies at 709–716; the sequence is PKLPPPKP. T720 carries the phosphothreonine modification. An SH3-binding motif is present at residues 723–729; that stretch reads RRRPPQP. Positions 735 to 749 are interaction with AP2A1, AP2A2 and AP2M1; the sequence is RQRPRESYQMGHMRR.

As to quaternary structure, forms a ternary EFNA5-EPHA3-ADAM10 complex mediating EFNA5 extracellular domain shedding by ADAM10 which regulates the EFNA5-EPHA3 complex internalization and function, the cleavage occurs in trans, with ADAM10 and its substrate being on the membranes of opposing cells. Interacts with the clathrin adapter AP2 complex subunits AP2A1, AP2A2, AP2B1, and AP2M1; this interaction facilitates ADAM10 endocytosis from the plasma membrane during long-term potentiation in hippocampal neurons. Forms a ternary complex composed of ADAM10, EPHA4 and CADH1; within the complex, ADAM10 cleaves CADH1 which disrupts adherens junctions. Interacts with EPHA2. Interacts with NGF in a divalent cation-dependent manner. Interacts with TSPAN14; the interaction promotes ADAM10 maturation and cell surface expression. Interacts with TSPAN5, TSPAN10, TSPAN14, TSPAN15, TSPAN17 and TSPAN33; these interactions regulate ADAM10 substrate specificity, endocytosis and turnover. Interacts (via extracellular domain) with TSPAN33 (via extracellular domain) and (via cytoplasmic domain) with AFDN; interaction with TSPAN33 allows the docking of ADAM10 to zonula adherens through a PDZ11-dependent interaction between TSPAN33 and PLEKHA7 while interaction with AFDN locks ADAM10 at zonula adherens. Interacts with DLG1; this interaction recruits ADAM10 to the cell membrane during long-term depression in hippocampal neurons. Interacts (via extracellular domain) with BACE1 (via extracellular domain). Interacts with FAM171A1. Zn(2+) serves as cofactor. In terms of processing, the precursor is cleaved by furin and PCSK7. As to expression, expressed in the brain, specifically in neurons and astrocytes (at protein level). Expressed in inner and outer pillar cells of the organ of Corti (at protein level). Expressed in kidney and lung.

Its subcellular location is the cell membrane. The protein resides in the golgi apparatus membrane. The protein localises to the cytoplasmic vesicle. It localises to the clathrin-coated vesicle. It is found in the cell projection. Its subcellular location is the axon. The protein resides in the dendrite. The protein localises to the cell junction. It localises to the adherens junction. It is found in the cytoplasm. It catalyses the reaction Endopeptidase of broad specificity.. With respect to regulation, catalytically inactive when the propeptide is intact and associated with the mature enzyme. The disintegrin and cysteine-rich regions modulate access of substrates to exerts an inhibitory effect on the cleavage of ADAM10 substrates. Functionally, transmembrane metalloprotease which mediates the ectodomain shedding of a myriad of transmembrane proteins, including adhesion proteins, growth factor precursors and cytokines being essential for development and tissue homeostasis. Associates with six members of the tetraspanin superfamily TspanC8 which regulate its exit from the endoplasmic reticulum and its substrate selectivity. Cleaves the membrane-bound precursor of TNF-alpha to its mature soluble form. Responsible for the proteolytical release of soluble JAM3 from endothelial cells surface. Responsible for the proteolytic release of several other cell-surface proteins, including heparin-binding epidermal growth-like factor, ephrin-A2, CD44, CDH2 and for constitutive and regulated alpha-secretase cleavage of amyloid precursor protein (APP) at '687-Lys-|-Leu-688'. Contributes to the normal cleavage of the cellular prion protein. Involved in the cleavage of the adhesion molecule L1 at the cell surface and in released membrane vesicles, suggesting a vesicle-based protease activity. Also controls the proteolytic processing of Notch and mediates lateral inhibition during neurogenesis. Required for the development of type 1 transitional B cells into marginal zone B cells, probably by cleaving Notch. Responsible for the FasL ectodomain shedding and for the generation of the remnant ADAM10-processed FasL (FasL APL) transmembrane form. Also cleaves the ectodomain of the integral membrane proteins CORIN and ITM2B. Mediates the proteolytic cleavage of LAG3, leading to release the secreted form of LAG3. Mediates the proteolytic cleavage of IL6R and IL11RA, leading to the release of secreted forms of IL6R and IL11RA. Enhances the cleavage of CHL1 by BACE1. Cleaves NRCAM. Cleaves TREM2, resulting in shedding of the TREM2 ectodomain. Involved in the development and maturation of glomerular and coronary vasculature. During development of the cochlear organ of Corti, promotes pillar cell separation by forming a ternary complex with CADH1 and EPHA4 and cleaving CADH1 at adherens junctions. May regulate the EFNA5-EPHA3 signaling. In Mus musculus (Mouse), this protein is Disintegrin and metalloproteinase domain-containing protein 10 (Adam10).